Consider the following 294-residue polypeptide: Lipoprotein NlpI (294 aa).

The signal sequence occupies residues 1–18 (MKPFLRWCFVATALTLAG). A lipid anchor (N-palmitoyl cysteine) is attached at C19. C19 is lipidated: S-diacylglycerol cysteine. 3 TPR repeats span residues 62-95 (AQLL…RPDM), 96-129 (PEVF…DPTY), and 234-267 (SETN…NVHN).

As to quaternary structure, homodimer.

It is found in the cell membrane. May be involved in cell division. May play a role in bacterial septation or regulation of cell wall degradation during cell division. The sequence is that of Lipoprotein NlpI (nlpI) from Shigella boydii serotype 4 (strain Sb227).